The chain runs to 324 residues: tRNA pseudouridine synthase B (324 aa).

D49 serves as the catalytic Nucleophile. Residues 87-107 (RSTDDLEGQPTKTSDKRPSRE) are disordered.

It belongs to the pseudouridine synthase TruB family. Type 1 subfamily.

It catalyses the reaction uridine(55) in tRNA = pseudouridine(55) in tRNA. Responsible for synthesis of pseudouridine from uracil-55 in the psi GC loop of transfer RNAs. This is tRNA pseudouridine synthase B from Brucella canis (strain ATCC 23365 / NCTC 10854 / RM-666).